The primary structure comprises 338 residues: Glycerol-3-phosphate dehydrogenase [NAD(P)+] (338 aa).

Residues Ser-13, Trp-14, and Lys-108 each contribute to the NADPH site. Residues Lys-108, Gly-139, and Ser-141 each coordinate sn-glycerol 3-phosphate. Ala-143 is a binding site for NADPH. Residues Lys-194, Asp-247, Ser-257, Arg-258, and Asn-259 each coordinate sn-glycerol 3-phosphate. Lys-194 functions as the Proton acceptor in the catalytic mechanism. Residue Arg-258 coordinates NADPH. NADPH is bound by residues Val-282 and Glu-284.

It belongs to the NAD-dependent glycerol-3-phosphate dehydrogenase family.

It is found in the cytoplasm. It carries out the reaction sn-glycerol 3-phosphate + NAD(+) = dihydroxyacetone phosphate + NADH + H(+). It catalyses the reaction sn-glycerol 3-phosphate + NADP(+) = dihydroxyacetone phosphate + NADPH + H(+). The protein operates within membrane lipid metabolism; glycerophospholipid metabolism. Its function is as follows. Catalyzes the reduction of the glycolytic intermediate dihydroxyacetone phosphate (DHAP) to sn-glycerol 3-phosphate (G3P), the key precursor for phospholipid synthesis. The polypeptide is Glycerol-3-phosphate dehydrogenase [NAD(P)+] (Streptococcus pneumoniae serotype 19F (strain G54)).